The primary structure comprises 567 residues: Interleukin-1 receptor-like 1 (567 aa).

Residues 1-26 (MIDRQRMGLWALAILTLPMYLTVTEG) form the signal peptide. Ig-like C2-type domains follow at residues 27–109 (SKSS…LNVT) and 120–203 (PDYL…VTAT). Residues 27 to 332 (SKSSWGLENE…LRRKQPIDHR (306 aa)) are Extracellular-facing. An intrachain disulfide couples C42 to C93. N-linked (GlcNAc...) asparagine glycosylation is found at N60, N101, N107, N146, N176, and N194. 2 cysteine pairs are disulfide-bonded: C117-C157 and C139-C187. The segment at 204 to 216 (RSFTVEEKGFSMF) is flexible linker. Residues 217-324 (PVITNPPYNH…GMIRHTIRLR (108 aa)) enclose the Ig-like C2-type 3 domain. 3 N-linked (GlcNAc...) asparagine glycosylation sites follow: N225, N259, and N278. 2 disulfides stabilise this stretch: C240–C308 and C243–C287. A Glycyl lysine isopeptide (Lys-Gly) (interchain with G-Cter in ubiquitin) cross-link involves residue K326. The helical transmembrane segment at 333-355 (SIYYIVAGCSLLLMFINVLVIVL) threads the bilayer. Residues 356-567 (KVFWIEVALF…GKACLDLKHF (212 aa)) are Cytoplasmic-facing. Residues 380 to 540 (KLYDAYIIYP…KFWKHVRYQM (161 aa)) form the TIR domain. Residue S442 is modified to Phosphoserine; by GSK3-beta. E466 is a catalytic residue.

It belongs to the interleukin-1 receptor family. Interacts with MYD88, IRAK1, IRAK4, and TRAF6. Bound to its ligand IL33, interacts with IL1RAP to form the minimal interleukin-33 signaling complex with a 1:1:1 stoichiometry. Interacts with KIT (bound to KITLG/SCF). A mast cell-specific KITLG/SCF-induced interleukin-33 signaling complex contains IL1RL1, IL1RAP, KIT and MYD88. Interacts with TMED1. Post-translationally, phosphorylated by GSK3B at Ser-442; leading to proteasomal degradation. In terms of processing, ubiquitinated at Lys-326 in a FBXL19-mediated manner; leading to proteasomal degradation. Ubiquitination by TRAF6 via 'Lys-27'-linked polyubiquitination and deubiquitination by USP38 serves as a critical regulatory mechanism for fine-tuning IL1RL1-mediated inflammatory response. As to expression, predominantly expressed in hematopoietic tissues, and in macrophage, erythroid, epithelial and fibroblast cell lines. Isoform A is expressed in brain astrocytes and microglia. Isoform B is expressed in brain endothelial cells.

The protein localises to the cell membrane. Its subcellular location is the secreted. It catalyses the reaction NAD(+) + H2O = ADP-D-ribose + nicotinamide + H(+). Receptor for interleukin-33 (IL-33) which plays crucial roles in innate and adaptive immunity, contributing to tissue homeostasis and responses to environmental stresses together with coreceptor IL1RAP. Its stimulation recruits MYD88, IRAK1, IRAK4, and TRAF6, followed by phosphorylation of MAPK3/ERK1 and/or MAPK1/ERK2, MAPK14, and MAPK8. Possibly involved in helper T-cell function. Upon tissue injury, induces UCP2-dependent mitochondrial rewiring that attenuates the generation of reactive oxygen species and preserves the integrity of Krebs cycle required for persistent production of itaconate and subsequent GATA3-dependent differentiation of inflammation-resolving alternatively activated macrophages. In terms of biological role, inhibits IL-33 signaling. This Mus musculus (Mouse) protein is Interleukin-1 receptor-like 1 (Il1rl1).